Here is a 247-residue protein sequence, read N- to C-terminus: 6-phosphogluconolactonase (247 aa).

Belongs to the glucosamine/galactosamine-6-phosphate isomerase family. 6-phosphogluconolactonase subfamily.

The catalysed reaction is 6-phospho-D-glucono-1,5-lactone + H2O = 6-phospho-D-gluconate + H(+). It functions in the pathway carbohydrate degradation; pentose phosphate pathway; D-ribulose 5-phosphate from D-glucose 6-phosphate (oxidative stage): step 2/3. Functionally, hydrolysis of 6-phosphogluconolactone to 6-phosphogluconate. The protein is 6-phosphogluconolactonase (pgl) of Mycobacterium bovis (strain ATCC BAA-935 / AF2122/97).